A 269-amino-acid polypeptide reads, in one-letter code: Tropinone reductase homolog At2g29320 (269 aa).

19–43 (LVTGAASGIGYAIVEELAGFGAKIH) lines the NADP(+) pocket. Residue Ser152 coordinates substrate. Catalysis depends on Tyr166, which acts as the Proton acceptor.

This sequence belongs to the short-chain dehydrogenases/reductases (SDR) family. SDR65C subfamily.

This Arabidopsis thaliana (Mouse-ear cress) protein is Tropinone reductase homolog At2g29320.